Consider the following 25-residue polypeptide: Growth-blocking peptide (25 aa).

A disulfide bond links cysteine 7 and cysteine 19. Position 25 is a glutamine amide (glutamine 25).

This sequence belongs to the GBP/PSP1/paralytic peptide family. In terms of tissue distribution, hemolymph.

Biogenic peptide that prevents, in lepidopteran, the onset of metamorphosis from larva to pupa. This growth-blocking peptide has repressive activity against juvenile hormone esterase. The chain is Growth-blocking peptide from Cotesia kariyai (Parasitic wasp).